A 309-amino-acid polypeptide reads, in one-letter code: Intron-encoded DNA endonuclease ai2a (309 aa).

Belongs to the LAGLIDADG endonuclease family.

Its subcellular location is the mitochondrion. Mitochondrial DNA endonuclease involved in intron homing. Cleaves only one strand of intronless DNA sequence at the site which coincides with the I-SceII cleavage recognition site. The sequence is that of Intron-encoded DNA endonuclease ai2a (ai2a) from Dictyostelium discoideum (Social amoeba).